The following is a 521-amino-acid chain: MGRIKSSSGRCSTARLEAVAVLVVVFGVASSSLRGCIAQQSGGGLTRGSFPEGFVFGTASAAYQYEGAVKEDGRGQTIWDTFAHTFGKITDFSNADVAVDQYHRFEEDIQLMADMGMDAYRFSIAWSRIYPNGVGQVNQAGIDHYNKLIDALLAKGIQPYVTLYHWDLPQALEDKYKGWLDRQIVDDFAAYAETCFREFGDRVKHWITLNEPHTVAIQGYDAGLQAPGRCSVLLHLYCKAGNSGTEPYVVAHHFILAHAAAASIYRTKYKATQNGQLGIAFDVMWFEPMSNTTIDIEAAKRAQEFQLGWFADPFFFGDYPATMRARVGERLPRFTADEAAVVKGALDFVGINHYTTYYTRHNNTNIIGTLLNNTLADTGTVSLPFKNGKPIGDRANSIWLYIVPRGMRSLMNYVKERYNSPPVYITENGMDDSNNPFISIKDALKDSKRIKYHNDYLTNLAASIKEDGCDVRGYFAWSLLDNWEWAAGYSSRFGLYFVDYKDNLKRYPKNSVQWFKALLKT.

An N-terminal signal peptide occupies residues 1–38; the sequence is MGRIKSSSGRCSTARLEAVAVLVVVFGVASSSLRGCIA. Residues Q64, H165, and 210–211 each bind a beta-D-glucoside; that span reads NE. The active-site Proton donor is the E211. A disulfide bridge connects residues C230 and C238. The N-linked (GlcNAc...) asparagine glycan is linked to N291. Y354 serves as a coordination point for a beta-D-glucoside. N362 and N372 each carry an N-linked (GlcNAc...) asparagine glycan. Residues E427, W477, 484–485, and F493 contribute to the a beta-D-glucoside site; that span reads EW. Residue E427 is the Nucleophile of the active site.

It belongs to the glycosyl hydrolase 1 family. As to quaternary structure, homodimer.

It localises to the secreted. The enzyme catalyses Hydrolysis of terminal, non-reducing beta-D-glucosyl residues with release of beta-D-glucose.. Functionally, hydrolyzes glycosides, oligosaccharides and hydrophobic glycosides. Possesses gibberellin ester beta-D-glucosidase activity. Can hydrolyze gibberellin A4 beta-D-glucosyl ester in vitro. The sequence is that of Beta-glucosidase 6 from Oryza sativa subsp. japonica (Rice).